Here is a 315-residue protein sequence, read N- to C-terminus: Inosine-uridine preferring nucleoside hydrolase (315 aa).

Aspartate 10 is a Ca(2+) binding site. Aspartate 14 provides a ligand contact to substrate. Ca(2+) contacts are provided by aspartate 15 and threonine 126. Substrate-binding residues include asparagine 160, glutamate 166, and asparagine 168. The active-site Proton donor is histidine 241. Aspartate 242 provides a ligand contact to Ca(2+).

Homotetramer. Requires Ca(2+) as cofactor.

The enzyme catalyses inosine + H2O = hypoxanthine + D-ribose. It carries out the reaction uridine + H2O = D-ribose + uracil. Its pathway is purine metabolism; purine nucleoside salvage. Functionally, catalyzes the hydrolysis of the N-glycosidic bond of commonly occurring purine and pyrimidine nucleosides into ribose and the base, but has a preference for inosine and uridine as substrates. Is not active on thymidine and 2'-deoxynucleosides. Functions in purine salvage from the blood of the host, a fundamental pathway since protozoan parasites such as C.fasciculata are incapable of de novo purine biosynthesis. The chain is Inosine-uridine preferring nucleoside hydrolase (IUNH) from Crithidia fasciculata.